An 836-amino-acid polypeptide reads, in one-letter code: Probable RING finger protein 207 homolog (836 aa).

Residues 8-42 (CTICKNDFEEPILFSCQHTTCRKCSNGSPSCKTCS) form an RING-type zinc finger. The segment at 68-115 (EEMEQCANCEQITLPMFYCETCQQSLCLACRNVTHQARMFSSHKIISS) adopts a B box-type 1; atypical zinc-finger fold. Zn(2+)-binding residues include Cys-73, Cys-76, Cys-97, and His-102. The segment at 122 to 164 (YSSSLCKDHNEPYILYCSDVRKLVCIQCFNGRPLEERHSFISI) adopts a B box-type 2; degenerate zinc-finger fold. The stretch at 527-557 (QNRIMAIEKEEENRRLNQEAKKKEELAGQSA) forms a coiled coil. Basic and acidic residues predominate over residues 540–552 (RRLNQEAKKKEEL). The segment at 540–571 (RRLNQEAKKKEELAGQSAAMKSLKHGKTKRKE) is disordered. The span at 561–571 (SLKHGKTKRKE) shows a compositional bias: basic residues.

In Caenorhabditis briggsae, this protein is Probable RING finger protein 207 homolog.